The sequence spans 436 residues: Histidinol dehydrogenase (436 aa).

Residues Ser242, Gln264, and His267 each contribute to the substrate site. The Zn(2+) site is built by Gln264 and His267. Active-site proton acceptor residues include Glu332 and His333. 4 residues coordinate substrate: His333, Asp366, Glu420, and His425. Asp366 contributes to the Zn(2+) binding site. His425 lines the Zn(2+) pocket.

Belongs to the histidinol dehydrogenase family. It depends on Zn(2+) as a cofactor.

It carries out the reaction L-histidinol + 2 NAD(+) + H2O = L-histidine + 2 NADH + 3 H(+). It functions in the pathway amino-acid biosynthesis; L-histidine biosynthesis; L-histidine from 5-phospho-alpha-D-ribose 1-diphosphate: step 9/9. In terms of biological role, catalyzes the sequential NAD-dependent oxidations of L-histidinol to L-histidinaldehyde and then to L-histidine. This chain is Histidinol dehydrogenase, found in Nitratidesulfovibrio vulgaris (strain ATCC 29579 / DSM 644 / CCUG 34227 / NCIMB 8303 / VKM B-1760 / Hildenborough) (Desulfovibrio vulgaris).